A 487-amino-acid polypeptide reads, in one-letter code: DNA ligase (487 aa).

The N6-AMP-lysine intermediate role is filled by lysine 159. Positions 164, 182, and 217 each coordinate ATP. Glutamate 217 provides a ligand contact to a divalent metal cation. Residues 229–237 are interaction with the sliding clamp; it reads EGLDFLFDA. Glutamate 344 provides a ligand contact to a divalent metal cation. ATP is bound by residues arginine 359 and lysine 365.

Belongs to the ATP-dependent DNA ligase family. Interacts with the sliding clamp. Requires a divalent metal cation as cofactor.

It catalyses the reaction ATP + (deoxyribonucleotide)n-3'-hydroxyl + 5'-phospho-(deoxyribonucleotide)m = (deoxyribonucleotide)n+m + AMP + diphosphate.. In terms of biological role, DNA ligase, which is expressed in the early stage of lytic development, has been implicated in T4 DNA synthesis and genetic recombination. It may also play a role in T4 DNA repair. This Escherichia coli (Bacteriophage T6) protein is DNA ligase (30).